The sequence spans 744 residues: 4'-phospho-dehydrooxetanocin synthase (744 aa).

Residues 119–259 form the B12-binding domain; it reads TVTLVNLCVI…KMLKKELKLD (141 aa). Positions 135, 139, 184, 241, 242, and 308 each coordinate cob(II)alamin. The 247-residue stretch at 299 to 545 folds into the Radical SAM core domain; the sequence is SKFRGALTLE…IVSYMLASME (247 aa). C313, C318, and C321 together coordinate [4Fe-4S] cluster. Residues P322, H325, K326, A361, and E363 each contribute to the cob(II)alamin site. S-adenosyl-L-methionine contacts are provided by E436 and E545.

It belongs to the radical SAM superfamily. Requires [4Fe-4S] cluster as cofactor. The cofactor is cob(II)alamin.

It catalyses the reaction dAMP + S-adenosyl-L-methionine = 4'-phospho-dehydrooxetanocin + 5'-deoxyadenosine + L-methionine + H(+). The catalysed reaction is AH2 + 2 S-adenosyl-L-methionine = 2 5'-deoxyadenosin-5'-yl radical + 2 L-methionine + A + 2 H(+). The enzyme catalyses 2 5'-deoxyadenosin-5'-yl radical + 2 dAMP + A = 2 4'-phospho-dehydrooxetanocin + 2 5'-deoxyadenosine + AH2. Requires OxsA for the oxidative ring contraction activity. Activation of OxsB requires its direct interaction with OxsA and is independent of OxsA phosphohydrolase activity. In contrast to ring contraction, methylation does not require the presence of OxsA. Functionally, isomerase involved in the biosynthesis of oxetanocin A (OXT-A), a nucleoside analog with antitumor, antiviral and antibacterial properties. Catalyzes an oxidative ring contraction of dAMP, forming an oxetane aldehyde. In addition, shows methyltransferase activity in vitro and is able to catalyze the radical mediated, stereoselective C2'-methylation of dAMP to form methylated 2'-dAMP. Also catalyzes the demethylation of S-adenosyl-L-methionine (SAM) to S-adenosyl-L-homocysteine (SAH). The sequence is that of 4'-phospho-dehydrooxetanocin synthase from Priestia megaterium (Bacillus megaterium).